The sequence spans 377 residues: Succinyl-diaminopimelate desuccinylase (377 aa).

His-68 contributes to the Zn(2+) binding site. Asp-70 is an active-site residue. Residue Asp-101 coordinates Zn(2+). The Proton acceptor role is filled by Glu-135. Residues Glu-136, Glu-164, and His-350 each coordinate Zn(2+).

It belongs to the peptidase M20A family. DapE subfamily. In terms of assembly, homodimer. Requires Zn(2+) as cofactor. It depends on Co(2+) as a cofactor.

It catalyses the reaction N-succinyl-(2S,6S)-2,6-diaminopimelate + H2O = (2S,6S)-2,6-diaminopimelate + succinate. It participates in amino-acid biosynthesis; L-lysine biosynthesis via DAP pathway; LL-2,6-diaminopimelate from (S)-tetrahydrodipicolinate (succinylase route): step 3/3. Its function is as follows. Catalyzes the hydrolysis of N-succinyl-L,L-diaminopimelic acid (SDAP), forming succinate and LL-2,6-diaminopimelate (DAP), an intermediate involved in the bacterial biosynthesis of lysine and meso-diaminopimelic acid, an essential component of bacterial cell walls. The chain is Succinyl-diaminopimelate desuccinylase from Psychromonas ingrahamii (strain DSM 17664 / CCUG 51855 / 37).